Reading from the N-terminus, the 119-residue chain is Large ribosomal subunit protein eL31z (119 aa).

It belongs to the eukaryotic ribosomal protein eL31 family.

The chain is Large ribosomal subunit protein eL31z (RPL31A) from Arabidopsis thaliana (Mouse-ear cress).